The sequence spans 254 residues: Nickel import ATP-binding protein NikD (254 aa).

Positions P2–V241 constitute an ABC transporter domain. ATP is bound at residue G36–S43.

The protein belongs to the ABC transporter superfamily. Nickel importer (TC 3.A.1.5.3) family. In terms of assembly, the complex is composed of two ATP-binding proteins (NikD and NikE), two transmembrane proteins (NikB and NikC) and a solute-binding protein (NikA).

The protein localises to the cell inner membrane. It carries out the reaction Ni(2+)(out) + ATP + H2O = Ni(2+)(in) + ADP + phosphate + H(+). Part of the ABC transporter complex NikABCDE involved in nickel import. Responsible for energy coupling to the transport system. The sequence is that of Nickel import ATP-binding protein NikD from Shigella boydii serotype 4 (strain Sb227).